Reading from the N-terminus, the 284-residue chain is Tropomyosin (284 aa).

Residue M1 is modified to N-acetylmethionine. Disordered stretches follow at residues 1–49 and 103–126; these read MDAI…NQKK and EERL…SERM. The stretch at 1–284 forms a coiled coil; it reads MDAIKKKMQA…DQAFSELSGF (284 aa). A compositionally biased stretch (basic and acidic residues) spans 12–45; sequence KLEKDNAMDKADTLEQQNKEANLRAEKTEEEIRA.

Belongs to the tropomyosin family. As to quaternary structure, homodimer. In terms of tissue distribution, expressed in leg muscle and chest protection muscle (at protein level).

Tropomyosin, in association with the troponin complex, plays a central role in the calcium dependent regulation of muscle contraction. This is Tropomyosin from Chionoecetes opilio (Atlantic snow crab).